We begin with the raw amino-acid sequence, 132 residues long: Fatty acid-binding protein, adipocyte (132 aa).

Cys-2 carries the N-acetylcysteine modification. A Phosphoserine modification is found at Ser-13. Tyr-20 bears the Phosphotyrosine; by Tyr-kinases mark. A Nuclear localization signal motif is present at residues 22 to 32 (KEVGVGFATRK). 127-129 (RVY) serves as a coordination point for a fatty acid.

The protein belongs to the calycin superfamily. Fatty-acid binding protein (FABP) family. In terms of assembly, monomer. Homodimer. Interacts with PPARG.

It is found in the cytoplasm. Its subcellular location is the nucleus. In terms of biological role, lipid transport protein in adipocytes. Binds both long chain fatty acids and retinoic acid. Delivers long-chain fatty acids and retinoic acid to their cognate receptors in the nucleus. The sequence is that of Fatty acid-binding protein, adipocyte (FABP4) from Cervus elaphus (Red deer).